Here is a 288-residue protein sequence, read N- to C-terminus: F420-non-reducing hydrogenase vhu subunit G (288 aa).

This sequence belongs to the [NiFe]/[NiFeSe] hydrogenase small subunit family. In terms of assembly, the F420-non-reducing hydrogenase vhu is composed of four subunits; VhuA, VhuD, VhuG and VhuU.

The polypeptide is F420-non-reducing hydrogenase vhu subunit G (vhuG) (Methanocaldococcus jannaschii (strain ATCC 43067 / DSM 2661 / JAL-1 / JCM 10045 / NBRC 100440) (Methanococcus jannaschii)).